The chain runs to 104 residues: Large ribosomal subunit protein uL24 (104 aa).

This sequence belongs to the universal ribosomal protein uL24 family. As to quaternary structure, part of the 50S ribosomal subunit.

Its function is as follows. One of two assembly initiator proteins, it binds directly to the 5'-end of the 23S rRNA, where it nucleates assembly of the 50S subunit. In terms of biological role, one of the proteins that surrounds the polypeptide exit tunnel on the outside of the subunit. The polypeptide is Large ribosomal subunit protein uL24 (Shewanella piezotolerans (strain WP3 / JCM 13877)).